Reading from the N-terminus, the 370-residue chain is Quinolinate synthase (370 aa).

2 residues coordinate iminosuccinate: His-62 and Ser-83. Residue Cys-128 participates in [4Fe-4S] cluster binding. Iminosuccinate contacts are provided by residues 154–156 (YAN) and Ser-171. A [4Fe-4S] cluster-binding site is contributed by Cys-215. Iminosuccinate is bound by residues 241–243 (HPE) and Thr-258. Cys-312 serves as a coordination point for [4Fe-4S] cluster.

It belongs to the quinolinate synthase family. Type 1 subfamily. [4Fe-4S] cluster serves as cofactor.

It is found in the cytoplasm. It carries out the reaction iminosuccinate + dihydroxyacetone phosphate = quinolinate + phosphate + 2 H2O + H(+). The protein operates within cofactor biosynthesis; NAD(+) biosynthesis; quinolinate from iminoaspartate: step 1/1. In terms of biological role, catalyzes the condensation of iminoaspartate with dihydroxyacetone phosphate to form quinolinate. The polypeptide is Quinolinate synthase (Neisseria meningitidis serogroup C (strain 053442)).